The following is a 166-amino-acid chain: Regulatory protein RecX (166 aa).

The protein belongs to the RecX family.

The protein localises to the cytoplasm. In terms of biological role, modulates RecA activity. The chain is Regulatory protein RecX from Escherichia coli O7:K1 (strain IAI39 / ExPEC).